Here is a 456-residue protein sequence, read N- to C-terminus: Ezy-1 protein (456 aa).

Positions 1-28 are cleaved as a signal peptide; the sequence is MQLSSSLRSARSAAASSGCALASRPVVA. Disordered regions lie at residues 167 to 189, 273 to 310, and 414 to 456; these read SDGG…DGDG, FTGK…GGSG, and QPAG…SPNM. The span at 281–293 shows a compositional bias: acidic residues; it reads AEGDDGEDEEEGE. Basic and acidic residues predominate over residues 418–428; sequence DGHEPEPKRPE.

This Chlamydomonas reinhardtii (Chlamydomonas smithii) protein is Ezy-1 protein (Ezy-1).